The chain runs to 148 residues: Lysozyme C (148 aa).

The first 18 residues, 1–18 (MKALIILGLVLLSVTVQG), serve as a signal peptide directing secretion. A C-type lysozyme domain is found at 19-148 (KIFERCELAR…VSQYVKGCGV (130 aa)). Disulfide bonds link Cys-24-Cys-146, Cys-48-Cys-134, Cys-83-Cys-99, and Cys-95-Cys-113. Active-site residues include Glu-53 and Asp-71.

The protein belongs to the glycosyl hydrolase 22 family. In terms of assembly, monomer.

Its subcellular location is the secreted. It carries out the reaction Hydrolysis of (1-&gt;4)-beta-linkages between N-acetylmuramic acid and N-acetyl-D-glucosamine residues in a peptidoglycan and between N-acetyl-D-glucosamine residues in chitodextrins.. Lysozymes have primarily a bacteriolytic function; those in tissues and body fluids are associated with the monocyte-macrophage system and enhance the activity of immunoagents. This Pygathrix nemaeus (Red-shanked douc langur) protein is Lysozyme C (LYZ).